A 364-amino-acid polypeptide reads, in one-letter code: MALALLEDWCRIMSVDEQKSLMVTGIPVDYEEAEIQEVLQETLKSLGSYRLLGKIFRKQENANAVLLELLEDTDVSAIPSEVQGKGGVWKVVFKTPNQDTEFLERLNLFLEKEGQTVSGMFRALGHEGMSPATVPCISPELLAHLLGQAMAHAPQPLLPMRYRKLRVFSGSAVPAPEEEPFEVWLEQATEIVKEWPVTEAEKKRWLAESLRGPALDLMHIVQADNPSISVEECLEAFKQVFGSLESRRTAQVRYLKTYQEEGEKVSAYVLRLETLLRRAVEKRAIPRRIADQVRLEQVMAGATLNQMLWCRLRELKDQGPPPNFLELMKVIREEEEEEASFENESIEEPEEGDGYGGWNHEGDD.

Ala2 carries the post-translational modification N-acetylalanine. The segment covering 335–353 has biased composition (acidic residues); it reads EEEEASFENESIEEPEEGD. Residues 335-364 are disordered; that stretch reads EEEEASFENESIEEPEEGDGYGGWNHEGDD. Residues 354–364 are compositionally biased toward gly residues; that stretch reads GYGGWNHEGDD.

It belongs to the PNMA family.

The protein resides in the nucleus. It localises to the nucleolus. This Macaca fascicularis (Crab-eating macaque) protein is Paraneoplastic antigen Ma2 homolog (PNMA2).